The primary structure comprises 283 residues: MSSNPSSVEKKLLHYTGKAIADFNMIRHGDRVMVCLSGGKDSFTLLTILNQLRIKSGNKFEIFAFTLDQAQPGWNDACLRQWLAEKSIPHEILTRDTYSIVKEKIPEGKTYCSLCSRLRRGIIYRYAEENGFNKIALGHHRDDLIRTLMMSILYNGDIRSMPPKLLSDNKKHIVIRPLCYVQEKDIITFASEQAFPIIPCNLCGSQENLMRKKVASLIDQLAIENPKVPSNMLHALQSLKPSQLMDQNFWNFKNLEDGLETAQSVQCEEVFNAQEFEFEDEKI.

Residues 37-42 (SGGKDS) carry the PP-loop motif motif. [4Fe-4S] cluster is bound by residues Cys-112, Cys-115, and Cys-203.

It belongs to the TtcA family. In terms of assembly, homodimer. Mg(2+) serves as cofactor. It depends on [4Fe-4S] cluster as a cofactor.

Its subcellular location is the cytoplasm. The catalysed reaction is cytidine(32) in tRNA + S-sulfanyl-L-cysteinyl-[cysteine desulfurase] + AH2 + ATP = 2-thiocytidine(32) in tRNA + L-cysteinyl-[cysteine desulfurase] + A + AMP + diphosphate + H(+). It participates in tRNA modification. Catalyzes the ATP-dependent 2-thiolation of cytidine in position 32 of tRNA, to form 2-thiocytidine (s(2)C32). The sulfur atoms are provided by the cysteine/cysteine desulfurase (IscS) system. The polypeptide is tRNA-cytidine(32) 2-sulfurtransferase (Legionella pneumophila (strain Corby)).